Here is a 450-residue protein sequence, read N- to C-terminus: Tubulin alpha-2 chain (450 aa).

A GTP-binding site is contributed by Gln11. Residue Lys40 is modified to N6-acetyllysine. The GTP site is built by Glu71, Gly144, Thr145, Thr179, Asn206, and Asn228. Glu71 is a Mg(2+) binding site. Residue Glu254 is part of the active site.

It belongs to the tubulin family. Dimer of alpha and beta chains. A typical microtubule is a hollow water-filled tube with an outer diameter of 25 nm and an inner diameter of 15 nM. Alpha-beta heterodimers associate head-to-tail to form protofilaments running lengthwise along the microtubule wall with the beta-tubulin subunit facing the microtubule plus end conferring a structural polarity. Microtubules usually have 13 protofilaments but different protofilament numbers can be found in some organisms and specialized cells. Mg(2+) is required as a cofactor. Post-translationally, undergoes a tyrosination/detyrosination cycle, the cyclic removal and re-addition of a C-terminal tyrosine residue by the enzymes tubulin tyrosine carboxypeptidase (TTCP) and tubulin tyrosine ligase (TTL), respectively. In terms of processing, acetylation of alpha chains at Lys-40 stabilizes microtubules and affects affinity and processivity of microtubule motors. This modification has a role in multiple cellular functions, ranging from cell motility, cell cycle progression or cell differentiation to intracellular trafficking and signaling.

Its subcellular location is the cytoplasm. The protein localises to the cytoskeleton. It carries out the reaction GTP + H2O = GDP + phosphate + H(+). Its function is as follows. Tubulin is the major constituent of microtubules, a cylinder consisting of laterally associated linear protofilaments composed of alpha- and beta-tubulin heterodimers. Microtubules grow by the addition of GTP-tubulin dimers to the microtubule end, where a stabilizing cap forms. Below the cap, tubulin dimers are in GDP-bound state, owing to GTPase activity of alpha-tubulin. The polypeptide is Tubulin alpha-2 chain (Gossypium hirsutum (Upland cotton)).